The chain runs to 175 residues: Sec-independent protein translocase protein TatB (175 aa).

A helical transmembrane segment spans residues 1–21; the sequence is MLDLGLSKMALIGVVALVVLG. The tract at residues 155–175 is disordered; that stretch reads SGAARVARHQPASLRRPTRFF.

The protein belongs to the TatB family. In terms of assembly, the Tat system comprises two distinct complexes: a TatABC complex, containing multiple copies of TatA, TatB and TatC subunits, and a separate TatA complex, containing only TatA subunits. Substrates initially bind to the TatABC complex, which probably triggers association of the separate TatA complex to form the active translocon.

Its subcellular location is the cell inner membrane. Its function is as follows. Part of the twin-arginine translocation (Tat) system that transports large folded proteins containing a characteristic twin-arginine motif in their signal peptide across membranes. Together with TatC, TatB is part of a receptor directly interacting with Tat signal peptides. TatB may form an oligomeric binding site that transiently accommodates folded Tat precursor proteins before their translocation. This is Sec-independent protein translocase protein TatB from Burkholderia lata (strain ATCC 17760 / DSM 23089 / LMG 22485 / NCIMB 9086 / R18194 / 383).